The primary structure comprises 576 residues: Alkaline phosphatase PhoD (576 aa).

The N-terminal stretch at 1 to 32 (MNSLLHHSFLKTVFSSLAIAIVTSSLSSVTIA) is a signal peptide. Zn(2+) is bound by residues Asp68 and Thr107. Thr107 serves as the catalytic Phosphothreonine intermediate. Cys108 and Cys144 are joined by a disulfide. Residues Asn128 and 188–190 (KDR) contribute to the substrate site. A disulfide bridge connects residues Cys248 and Cys332. Residues Asp318, His322, Asp363, His364, and His508 each coordinate Zn(2+). A disulfide bridge links Cys562 with Cys573.

In terms of assembly, monomer. It depends on Zn(2+) as a cofactor.

The enzyme catalyses a phosphate monoester + H2O = an alcohol + phosphate. Alkaline phosphatase with broad substrate specificity. Has phosphatase activity towards nucleotide and sugar phosphates with a preference to nucleotide phosphates. Has no phosphodiesterase activity. This is Alkaline phosphatase PhoD from Zymomonas mobilis subsp. mobilis (strain ATCC 31821 / ZM4 / CP4).